We begin with the raw amino-acid sequence, 437 residues long: Eukaryotic peptide chain release factor subunit 1 (437 aa).

Positions 61–64 match the NIKS motif; plays an important role in translational termination motif; sequence NIKS.

Belongs to the eukaryotic release factor 1 family. Component of the eRF1-eRF3-GTP ternary complex, composed of ETF1/ERF1 and eRF3 (GSPT1/ERF3A or GSPT2/ERF3B) and GTP.

The protein localises to the cytoplasm. In terms of biological role, component of the eRF1-eRF3-GTP ternary complex, a ternary complex that mediates translation termination in response to the termination codons. The eRF1-eRF3-GTP complex binds to a stop codon in the ribosomal A-site. ETF1/ERF1 is responsible for stop codon recognition and inducing hydrolysis of peptidyl-tRNA. Following GTP hydrolysis, eRF3 (GSPT1/ERF3A or GSPT2/ERF3B) dissociates, permitting ETF1/eRF1 to accommodate fully in the A-site, followed by hydrolysis of peptidyl-tRNA. This Xenopus tropicalis (Western clawed frog) protein is Eukaryotic peptide chain release factor subunit 1 (etf1).